A 1249-amino-acid chain; its full sequence is Protein transport protein Sec31A (1249 aa).

7 WD repeats span residues 4–47, 64–111, 120–160, 166–206, 209–254, 258–298, and 301–342; these read KEID…EIFE, SSSH…AGDK, KHTG…TPMT, QPPE…PIIK, DHSN…SPLR, NHAR…VLYE, and TNTQ…DGLR. Positions 161-470 are interaction with SEC13; that stretch reads PGAKTQPPED…IDASQTDFEK (310 aa). Residues 397 to 429 form a WD 8; interaction with SEC13 repeat; the sequence is SFSFGGKLVTFENVTGQPQQGAEQPRRQPVFIS. Arg-423 carries the post-translational modification Asymmetric dimethylarginine. A phosphoserine mark is found at Ser-526 and Ser-531. Lys-647 is covalently cross-linked (Glycyl lysine isopeptide (Lys-Gly) (interchain with G-Cter in ubiquitin)). Disordered regions lie at residues 790 to 829, 842 to 940, and 954 to 1123; these read QGRS…VQSQ, TTWS…RYPN, and PHMY…PIGN. The segment covering 796–805 has biased composition (polar residues); it reads GQESSRSSYE. The residue at position 799 (Ser-799) is a Phosphoserine. The tract at residues 800-1142 is interaction with PDCD6; the sequence is SRSSYEGQPL…TEKITKKPIP (343 aa). The ALG-2-binding site motif-2 (ABS-2) signature appears at 873-879; that stretch reads GFIMHGN. A compositionally biased stretch (pro residues) spans 898-908; the sequence is QPPPYPQPQPY. 2 stretches are compositionally biased toward low complexity: residues 961–970 and 991–1007; these read PASSPTSSSA and PSSS…GTPP. Polar residues predominate over residues 1013–1024; the sequence is PASQRTGPQNGW. Residues 1056–1074 show a composition bias toward low complexity; the sequence is PGGDPQPQGLQQQPSASGP. At Thr-1190 the chain carries Phosphothreonine. Ser-1192 carries the phosphoserine modification. Lys-1246 participates in a covalent cross-link: Glycyl lysine isopeptide (Lys-Gly) (interchain with G-Cter in ubiquitin).

Belongs to the WD repeat SEC31 family. In terms of assembly, COPII is composed of at least 5 proteins: the SEC23/24 complex, the SEC13/31 complex and SAR1. SEC13 and SEC31 make a 2:2 tetramer that forms the edge element of the COPII outer coat. The tetramer self-assembles in multiple copies to form the complete polyhedral cage. Interacts (via WD 8) with SEC13. Interacts with PDCD6; interaction takes place in response to cytosolic calcium increase and leads to bridge together the BCR(KLHL12) complex and SEC31A, leading to monoubiquitination. Interacts with KLHL12. Post-translationally, monoubiquitinated by the BCR(KLHL12) E3 ubiquitin ligase complex, leading to regulate the size of COPII coats. Ubiquitously expressed.

Its subcellular location is the cytoplasm. It is found in the cytoplasmic vesicle. The protein resides in the COPII-coated vesicle membrane. It localises to the endoplasmic reticulum membrane. Its function is as follows. Component of the coat protein complex II (COPII) which promotes the formation of transport vesicles from the endoplasmic reticulum (ER). The coat has two main functions, the physical deformation of the endoplasmic reticulum membrane into vesicles and the selection of cargo molecules. The polypeptide is Protein transport protein Sec31A (Sec31a) (Rattus norvegicus (Rat)).